A 326-amino-acid polypeptide reads, in one-letter code: WRKY transcription factor 8 (326 aa).

The tract at residues 115–172 (VRVSASPSSSEADHHPGEDSGKIRKKREVRDGGEDDQRSQKVVKTKKKEEKKKEPRVS) is disordered. Composition is skewed to basic and acidic residues over residues 125–153 (EADH…DQRS) and 161–170 (KKEEKKKEPR). The segment at residues 177 to 242 (TEVDHLEDGY…YESQHNHPIP (66 aa)) is a DNA-binding region (WRKY).

The protein belongs to the WRKY group II-c family. Interacts with VQ9 (via N-terminus). In terms of tissue distribution, highly expressed in roots and at lower levels in rosette leaves, cauline leaves, stems, flowers and siliques.

It localises to the nucleus. Its function is as follows. Transcription factor. Interacts specifically with the W box (5'-TTGAC[CT]-3'), a frequently occurring stress-responsive cis-acting element. Functions as a positive regulator of salt stress response. Binds the W box of LTI78/RD29A stress-response gene and directly regulates its transcription under salt stress. Functions antagonistically with VQ9 to regulate sodium and potassium homeostasis under salt stress by regulating the expression of downstream SOS (SALT OVERLY SENSITIVE) stress-responsive genes. The DNA-binding activity of WRKY8 is decreased by VQ9. Functions as a negative regulator of basal resistance to the bacterial pathogen P.syringae and as positive regulator of resistance to the fungal pathogen to B.cinerea. Functions as a positive regulator of defense response againt tobamovirus (TMV) by regulating both the abscisic acid and ethylene signaling pathways. Positively regulates ABI4 expression and negatively modulates ACS6 and ERF104 expression by directly binding to the W box consensus motifs within their promoters. This Arabidopsis thaliana (Mouse-ear cress) protein is WRKY transcription factor 8 (WRKY8).